Consider the following 561-residue polypeptide: Dihydroxy-acid dehydratase (561 aa).

Aspartate 80 serves as a coordination point for Mg(2+). Cysteine 121 contributes to the [2Fe-2S] cluster binding site. Residues aspartate 122 and lysine 123 each coordinate Mg(2+). Lysine 123 is modified (N6-carboxylysine). Residue cysteine 194 coordinates [2Fe-2S] cluster. Mg(2+) is bound at residue glutamate 448. The Proton acceptor role is filled by serine 474.

The protein belongs to the IlvD/Edd family. In terms of assembly, homodimer. [2Fe-2S] cluster is required as a cofactor. The cofactor is Mg(2+).

The enzyme catalyses (2R)-2,3-dihydroxy-3-methylbutanoate = 3-methyl-2-oxobutanoate + H2O. It carries out the reaction (2R,3R)-2,3-dihydroxy-3-methylpentanoate = (S)-3-methyl-2-oxopentanoate + H2O. It functions in the pathway amino-acid biosynthesis; L-isoleucine biosynthesis; L-isoleucine from 2-oxobutanoate: step 3/4. Its pathway is amino-acid biosynthesis; L-valine biosynthesis; L-valine from pyruvate: step 3/4. Its function is as follows. Functions in the biosynthesis of branched-chain amino acids. Catalyzes the dehydration of (2R,3R)-2,3-dihydroxy-3-methylpentanoate (2,3-dihydroxy-3-methylvalerate) into 2-oxo-3-methylpentanoate (2-oxo-3-methylvalerate) and of (2R)-2,3-dihydroxy-3-methylbutanoate (2,3-dihydroxyisovalerate) into 2-oxo-3-methylbutanoate (2-oxoisovalerate), the penultimate precursor to L-isoleucine and L-valine, respectively. This chain is Dihydroxy-acid dehydratase, found in Anaeromyxobacter sp. (strain Fw109-5).